The following is a 260-amino-acid chain: MAKDDSTVRCFQGLLIFGHVIVGMCGIALTAECIFFVSDQHSLYPLLEATNNDDIFGAAWIGMFVGICLFCLSVLAIVGIMKSNRKILLAYFIMMFIVYGFEVASCITAATQRDFFTTNLFLKQMLMRYQNNSPPTNDDEWKNNGVTKTWDRLMLQDHCCGVNGPSDWQKYTSAFRVENNDADYPWPRQCCVMDKLKEPLNLDACKLGVPGYYHSQGCYELISGPMDRHAWGVAWFGFAILCWTFWVLLGTMFYWSRIEY.

Topologically, residues 1-15 (MAKDDSTVRCFQGLL) are cytoplasmic. Residues 16-36 (IFGHVIVGMCGIALTAECIFF) traverse the membrane as a helical segment. Residues 37 to 59 (VSDQHSLYPLLEATNNDDIFGAA) are Extracellular-facing. A helical membrane pass occupies residues 60–80 (WIGMFVGICLFCLSVLAIVGI). At 81-86 (MKSNRK) the chain is on the cytoplasmic side. Residues 87–107 (ILLAYFIMMFIVYGFEVASCI) form a helical membrane-spanning segment. Over 108-229 (TAATQRDFFT…ELISGPMDRH (122 aa)) the chain is Extracellular. The helical transmembrane segment at 230–250 (AWGVAWFGFAILCWTFWVLLG) threads the bilayer. Topologically, residues 251-260 (TMFYWSRIEY) are cytoplasmic.

This sequence belongs to the tetraspanin (TM4SF) family. In terms of assembly, heterodimer with uroplakin-3A (UPK3A) or uroplakin-3B (UPK3B). In terms of processing, N-glycosylated with high-mannose oligosaccharides. Bladder epithelium.

Its subcellular location is the membrane. Component of the asymmetric unit membrane (AUM); a highly specialized biomembrane elaborated by terminally differentiated urothelial cells. May play an important role in normal bladder epithelial physiology, possibly in regulating membrane permeability of superficial umbrella cells or in stabilizing the apical membrane through AUM/cytoskeletal interactions. This Mus musculus (Mouse) protein is Uroplakin-1b (Upk1b).